We begin with the raw amino-acid sequence, 72 residues long: Small, acid-soluble spore protein C (72 aa).

This sequence belongs to the alpha/beta-type SASP family.

SASP are bound to spore DNA. They are double-stranded DNA-binding proteins that cause DNA to change to an a-like conformation. They protect the DNA backbone from chemical and enzymatic cleavage and are thus involved in dormant spore's high resistance to UV light. The chain is Small, acid-soluble spore protein C (sspC) from Bacillus subtilis (strain 168).